The sequence spans 596 residues: Invasin CotH7 (596 aa).

Residues 1 to 17 (MKSLSFISLACLTAVHA) form the signal peptide. N-linked (GlcNAc...) asparagine glycans are attached at residues asparagine 82, asparagine 146, asparagine 163, asparagine 169, asparagine 288, asparagine 440, and asparagine 544. Low complexity predominate over residues 528–544 (SATIAAPATSESASQDN). The disordered stretch occupies residues 528–557 (SATIAAPATSESASQDNTSDDTDSASTSSS). Serine 567 carries the GPI-anchor amidated serine lipid modification. Positions 568–596 (SASKSAPTFYCLQLVLYLSLSFKNLYKYI) are cleaved as a propeptide — removed in mature form.

In terms of assembly, interacts with host integrin beta-1 ITGB1 on the cell surface of host alveolar epithelial cells.

It localises to the cell membrane. Functionally, promotes invasion of host epithelial cells by adhering to receptors on the host cell surface to facilitate endocytosis of the pathogen into host cells. Probably binds integrin ITGA3:ITGB1 via ITGB1, on the cell surface of host alveolar epithelial cells. This is Invasin CotH7 from Rhizopus delemar (strain RA 99-880 / ATCC MYA-4621 / FGSC 9543 / NRRL 43880) (Mucormycosis agent).